Here is a 248-residue protein sequence, read N- to C-terminus: (2S)-[(R)-hydroxy(phenyl)methyl]succinyl-CoA dehydrogenase subunit BbsD (248 aa).

Residues Ser-15, Asp-36, Asp-62, Ile-63, Asn-89, Tyr-153, and Lys-157 each coordinate NAD(+). Tyr-153 functions as the Proton acceptor in the catalytic mechanism.

It belongs to the short-chain dehydrogenases/reductases (SDR) family. As to quaternary structure, heterotetramer composed of 2 inactive BbsC subunits and 2 active BbsD subunits.

The catalysed reaction is (2S)-[(R)-hydroxy(phenyl)methyl]succinyl-CoA + NAD(+) = (S)-2-benzoylsuccinyl-CoA + NADH + H(+). It participates in xenobiotic degradation; toluene degradation. Its activity is regulated as follows. Activity is probably regulated by the inactive BbsC subunit. Functionally, involved in an anaerobic toluene degradation pathway. Active subunit that catalyzes the oxidation of 2-(alpha-hydroxybenzyl)succinyl-CoA to 2-benzoylsuccinyl-CoA. In vitro, can catalyze the NADH-dependent reduction of the artificial substrates 2,2-dichloroacetophene and 2,4'-dichloroacetophenone. This chain is (2S)-[(R)-hydroxy(phenyl)methyl]succinyl-CoA dehydrogenase subunit BbsD, found in Thauera aromatica.